We begin with the raw amino-acid sequence, 1700 residues long: Rho guanine nucleotide exchange factor 28 (1700 aa).

The tract at residues 288-335 is disordered; that stretch reads TERATMPSGAAETEEEVRNLESGRSPSEEEEDGQLVKSQADGPSEQED. 3 positions are modified to phosphoserine: serine 312, serine 314, and serine 478. The segment at 483-525 is disordered; sequence VADSEEEGRSEPPICYAVGSQSSPRTGLPGGDELDSFDANTEP. Residue serine 623 is modified to Phosphoserine. A Phorbol-ester/DAG-type zinc finger spans residues 651-698; it reads RHQFVPGTFSGVLQCSGCDKTLLGKESLQCANCKANTHKGCKDTVPPC. Residues 709–720 are compositionally biased toward polar residues; it reads NKPQTILGSSSV. Disordered regions lie at residues 709-761 and 774-799; these read NKPQ…VPGT and ESEG…GSSP. Residues 728 to 737 show a composition bias toward low complexity; it reads LSLHPSPSMP. A compositionally biased stretch (polar residues) spans 774–783; sequence ESEGDSNSWR. The DH domain maps to 848 to 1043; it reads KRQDVIFELM…KDMIAAVDLK (196 aa). One can recognise a PH domain in the interval 1085-1187; the sequence is ALLHDGLVYW…WMRRIQQAVE (103 aa). The interval 1186 to 1207 is disordered; that stretch reads VESCPEEEGGRTSESDEERRKA. The segment covering 1193–1207 has biased composition (basic and acidic residues); the sequence is EGGRTSESDEERRKA. Residues 1294–1303 are interaction with PTK2/FAK1; required for regulation of axonal branching and synapse formation; sequence DVSQPSEEGP. Residues 1369 to 1380 form a mediates cytoplasmic retention and interaction with YWHAH region; that stretch reads IIQAIQNLTRLL. Residues 1421-1700 form an interaction with microtubules region; sequence QEKSRYLEKH…DGAEENIVYL (280 aa). Positions 1473 to 1522 form a coiled coil; sequence ERECQSQEELLLRHRSELDHQLQEYQQNLERLREGQRMVERERQRMRDQQ. Residues 1493-1524 form an RNA-binding region; sequence QLQEYQQNLERLREGQRMVERERQRMRDQQGL. Position 1535 is a phosphoserine (serine 1535). Residues 1563-1576 are mediates cytoplasmic retention and interaction with MAPK8IP1; that stretch reads FLNDAFTHMSLNTS. The segment at 1574–1598 is disordered; the sequence is NTSNKPNPSGAPWDAHPPGGSHLDL. Serine 1604 bears the Phosphoserine mark. A disordered region spans residues 1612–1700; sequence VSQPSDVNSE…DGAEENIVYL (89 aa). Polar residues predominate over residues 1613–1623; sequence SQPSDVNSELW. The segment covering 1633–1642 has biased composition (basic and acidic residues); sequence ARQESIKDSC. Residues 1647 to 1672 show a composition bias toward polar residues; that stretch reads DLNSFQTESPDPQDSNQRGPQPQTLI.

As to quaternary structure, homooligomer; forms cytoplasmic aggregates. Forms a complex with MAPK8 and MAPK8IP1. Interacts with RHOA. Interacts with microtubules. Interacts with YWHAE and YWHAH. Interacts with PTK2/FAK1. Interacts with NEFL. Interacts with CTNND2; prevents interaction with RHOA. In terms of processing, phosphorylated on tyrosine upon stimulation of cells by laminin.

Its subcellular location is the cytoplasm. It localises to the cell membrane. Functionally, functions as a RHOA-specific guanine nucleotide exchange factor regulating signaling pathways downstream of integrins and growth factor receptors. Functions in axonal branching, synapse formation and dendritic morphogenesis. Also functions in focal adhesion formation, cell motility and B-lymphocytes activation. May regulate NEFL expression and aggregation and play a role in apoptosis. The chain is Rho guanine nucleotide exchange factor 28 (Arhgef28) from Rattus norvegicus (Rat).